The following is a 35-amino-acid chain: uncharacterized protein (35 aa).

This is an uncharacterized protein from Haemophilus influenzae (strain ATCC 51907 / DSM 11121 / KW20 / Rd).